The chain runs to 194 residues: Imidazoleglycerol-phosphate dehydratase (194 aa).

It belongs to the imidazoleglycerol-phosphate dehydratase family.

The protein localises to the cytoplasm. It carries out the reaction D-erythro-1-(imidazol-4-yl)glycerol 3-phosphate = 3-(imidazol-4-yl)-2-oxopropyl phosphate + H2O. It functions in the pathway amino-acid biosynthesis; L-histidine biosynthesis; L-histidine from 5-phospho-alpha-D-ribose 1-diphosphate: step 6/9. The protein is Imidazoleglycerol-phosphate dehydratase of Limosilactobacillus fermentum (strain NBRC 3956 / LMG 18251) (Lactobacillus fermentum).